A 617-amino-acid polypeptide reads, in one-letter code: DNA-(apurinic or apyrimidinic site) endonuclease (617 aa).

Residues 74–99 (IKNSDEQNNSNNNNNNSSSSNFCSNN) are disordered. Residues 81–99 (NNSNNNNNNSSSSNFCSNN) are compositionally biased toward low complexity. Mg(2+) is bound by residues Asn284 and Glu317. Positions 326-349 (SEPCDNKNKNKNKNDGIRDRGKIK) are disordered. A compositionally biased stretch (basic and acidic residues) spans 329 to 349 (CDNKNKNKNKNDGIRDRGKIK). Residues Asp474, Asn476, Asp606, and His607 each contribute to the Mg(2+) site. His607 functions as the Proton acceptor in the catalytic mechanism.

Belongs to the DNA repair enzymes AP/ExoA family. The cofactor is Mg(2+). It depends on Mn(2+) as a cofactor. In terms of processing, may be proteolytically cleaved into a 64 kDa form.

Its subcellular location is the mitochondrion. The catalysed reaction is Exonucleolytic cleavage in the 3'- to 5'-direction to yield nucleoside 5'-phosphates.. Its activity is regulated as follows. Apurinic/apyrimidinic (AP) endonuclease activity is maximal at low Mg(2+) (0.5-2 mM) with no activity seen at high concentrations (more than 10 mM). 3'-5' exonuclease activity is maximal in the range of 0.5-2 mM Mg(2+) with activity seen up to 10 mM Mg(2+). In terms of biological role, multifunctional protein that plays a central role in mitochondrial DNA base excision repair (BER) pathway induced by oxidative stress. Has apurinic/apyrimidinic (AP) endonuclease activity towards double-stranded DNA (dsDNA). Has nucleotide incision repair (NIR) activity; acts on dsDNA with oxidized bases thymine glycol and 5,6-dihydro-2'-deoxyuridine. Has 3'-5' exonuclease; can use dsDNA templates with 3'-OH termini including blunt-end, gapped and mismatched 3'-recessed. Has 3'-phosphatase activity; cleaves 3'-phosphate from blunt, recessed and gapped dsDNA templates, followed by 3'-5' exonuclease activity. Has RNase H-like activity; cleaves RNA on 3'-recessed RNA-DNA duplex. Plays a role in merosome infection of host erythrocytes. The polypeptide is DNA-(apurinic or apyrimidinic site) endonuclease (Plasmodium falciparum (isolate 3D7)).